A 132-amino-acid chain; its full sequence is Small ribosomal subunit protein uS8 (132 aa).

This sequence belongs to the universal ribosomal protein uS8 family. As to quaternary structure, part of the 30S ribosomal subunit. Contacts proteins S5 and S12.

Its function is as follows. One of the primary rRNA binding proteins, it binds directly to 16S rRNA central domain where it helps coordinate assembly of the platform of the 30S subunit. This Brucella melitensis biotype 1 (strain ATCC 23456 / CCUG 17765 / NCTC 10094 / 16M) protein is Small ribosomal subunit protein uS8.